Reading from the N-terminus, the 672-residue chain is Protein seu-1 (672 aa).

2 disordered regions span residues 1 to 463 (MSSI…AGTE) and 576 to 672 (LAPP…LKHL). A compositionally biased stretch (basic and acidic residues) spans 8 to 20 (NDNRRPTFRDHRT). The span at 25 to 34 (GRGGSGGGGR) shows a compositional bias: gly residues. A compositionally biased stretch (basic and acidic residues) spans 62–85 (RSQDHRQRSPEVRRHRSPEKESKD). A compositionally biased stretch (low complexity) spans 87-105 (VVTSTGSSRGATSASVTSS). Basic and acidic residues-rich tracts occupy residues 107-138 (RRHE…DADR), 189-226 (VSRH…KSNG), 234-268 (RRRE…KVED), and 289-306 (EQAK…ESHQ). Residues 307 to 317 (SAHSAAVSNAS) show a composition bias toward low complexity. The span at 322–343 (SEEELDYEEDDIDVDLDGDIDV) shows a compositional bias: acidic residues. Composition is skewed to basic and acidic residues over residues 366–375 (NDVKDETMEE), 382–396 (PEKK…DDKD), 410–424 (RRED…SDHH), 436–447 (RATDHKESRRSE), 607–626 (SFGD…RHMD), and 636–659 (DHRV…ERGF).

In terms of tissue distribution, highly expressed in intestinal cells, lateral hypodermal (seam) cells, Pn.p ventral hypodermal cells, and spermatheca. Expressed at low levels in the ventral nerve cord.

It localises to the nucleus. Together with unc-5, involved in touch neuron axon guidance. During gonad morphogenesis, plays a role in the unc-5-/unc-6-mediated migration of distal tip cells along the body. The chain is Protein seu-1 from Caenorhabditis elegans.